Consider the following 220-residue polypeptide: MVLKTIEYDYLCKIVVIGDSGVGKSNLLSRYNKNEFSVGKLSTIGVEFSTKTLKIDNKLIKLQLWDTAGQEKYNSITESYYKGAIGALIVYNIADRNSFNNLEKWLKKFRENAHQDYGIMLVGNKSDLKEYREVSTLEGKQFAEKHYMQFIETSALDSNNVETAFNNLFNFIYYSLFKNKTMTLDINNNGNNNSNIMVGDCEPIQFDQRYTINKPVYDCC.

18-25 (GDSGVGKS) is a GTP binding site. The short motif at 40–48 (KLSTIGVEF) is the Effector region element. GTP is bound by residues 66-70 (DTAGQ) and 124-127 (NKSD). 2 S-geranylgeranyl cysteine lipidation sites follow: Cys219 and Cys220.

Belongs to the small GTPase superfamily. Rab family.

It is found in the cell membrane. The polypeptide is Ras-related protein Rab-11B (rab11B) (Dictyostelium discoideum (Social amoeba)).